The primary structure comprises 539 residues: Probable protein kinase UbiB (539 aa).

Residues 23–43 (DLLFALPLPWWMLAVRFVLPW) traverse the membrane as a helical segment. The Protein kinase domain occupies 125–492 (RFDETPLASA…WHDRKDEPVL (368 aa)). Residues 131–139 (LASASVAQV) and K153 each bind ATP. D288 (proton acceptor) is an active-site residue. The next 2 helical transmembrane spans lie at 494-514 (LIGAALLVGGAIQGWVMSEAA) and 517-537 (LLTLTAWPAAIMLIAGLYLIV).

The protein belongs to the ABC1 family. UbiB subfamily.

The protein resides in the cell inner membrane. The protein operates within cofactor biosynthesis; ubiquinone biosynthesis [regulation]. Its function is as follows. Is probably a protein kinase regulator of UbiI activity which is involved in aerobic coenzyme Q (ubiquinone) biosynthesis. In Pseudomonas syringae pv. tomato (strain ATCC BAA-871 / DC3000), this protein is Probable protein kinase UbiB.